The primary structure comprises 198 residues: Snake venom metalloproteinase neuwiedase (198 aa).

Positions 8 to 198 constitute a Peptidase M12B domain; it reads RYIELVIVAD…QTFLTNHNPQ (191 aa). Ca(2+)-binding residues include glutamate 11 and aspartate 95. Histidine 144 is a binding site for Zn(2+). The active site involves glutamate 145. Histidine 148 and histidine 154 together coordinate Zn(2+). Disulfide bonds link cysteine 159–cysteine 183 and cysteine 161–cysteine 166.

This sequence belongs to the venom metalloproteinase (M12B) family. P-I subfamily. Zn(2+) serves as cofactor. Expressed by the venom gland.

It is found in the secreted. With respect to regulation, inhibited by EDTA, EGTA and 1,10-phenanthroline, partially inhibited by beta-mercaptoethanol and not inhibited by serine protease inhibitors (leupeptin and aprotinin). Also inhibited by an excess of zinc, mercury and magnesium ions. Extracts of the plant Casearia mariquitensis neutralizes the decrease of platelets and plasma fibrinogen induced by the protease. The same extracts also partially inhibit Bbeta chain cleavage, but not Aalpha chain cleavage. Its function is as follows. This metalloprotease hydrolyzes the Aalpha chain of fibrin and fibrinogen first followed by the Bbeta chain and shows no effect on the gamma chain. It is also able to degrade type I collagen, fibronectin, laminin and induces inflammatory reaction. It is devoid of hemorrhagic and thrombotic activities, except in lung where it induces pulmonary bleeding. It also induces a mild myotoxic reaction. It is not able to inhibit platelet aggregation, but it induces decrease of platelets and plasma fibrinogen. It contributes to local tissue damage by inducing edema, inflammatory infiltrate and mild myotoxicity, and by degrading extracellular matrix components. The chain is Snake venom metalloproteinase neuwiedase from Bothrops pauloensis (Neuwied's lancehead).